Here is a 152-residue protein sequence, read N- to C-terminus: Putative pre-16S rRNA nuclease (152 aa).

This sequence belongs to the YqgF nuclease family.

The protein resides in the cytoplasm. Its function is as follows. Could be a nuclease involved in processing of the 5'-end of pre-16S rRNA. The polypeptide is Putative pre-16S rRNA nuclease (Synechocystis sp. (strain ATCC 27184 / PCC 6803 / Kazusa)).